The primary structure comprises 870 residues: UvrABC system protein B (870 aa).

One can recognise a Helicase ATP-binding domain in the interval 20–410 (EGVDNNDRTQ…VFAEQVIRPT (391 aa)). 33 to 40 (GVTGSGKT) serves as a coordination point for ATP. Positions 86-109 (YYDYYQPEAYVPRTDTFIEKESSI) match the Beta-hairpin motif. In terms of domain architecture, Helicase C-terminal spans 425–591 (QVDDVVGEIR…SVKSRISDIL (167 aa)). Residues 620-655 (KAHLDAMEKQMRDAAANLDFEKAARIRDEIKRLREM) enclose the UVR domain. Disordered regions lie at residues 671–698 (ESPVSGREKGKHNKGVAKHRTAEEQERF) and 741–870 (AKPS…RPGK). Over residues 679 to 689 (KGKHNKGVAKH) the composition is skewed to basic residues. Composition is skewed to basic and acidic residues over residues 793–808 (NSLDEMTVRRTEKPVE) and 827–836 (TDVKDRDDSA). Positions 858–870 (EKRRPGKTGRPGK) are enriched in basic residues.

Belongs to the UvrB family. As to quaternary structure, forms a heterotetramer with UvrA during the search for lesions. Interacts with UvrC in an incision complex.

The protein localises to the cytoplasm. The UvrABC repair system catalyzes the recognition and processing of DNA lesions. A damage recognition complex composed of 2 UvrA and 2 UvrB subunits scans DNA for abnormalities. Upon binding of the UvrA(2)B(2) complex to a putative damaged site, the DNA wraps around one UvrB monomer. DNA wrap is dependent on ATP binding by UvrB and probably causes local melting of the DNA helix, facilitating insertion of UvrB beta-hairpin between the DNA strands. Then UvrB probes one DNA strand for the presence of a lesion. If a lesion is found the UvrA subunits dissociate and the UvrB-DNA preincision complex is formed. This complex is subsequently bound by UvrC and the second UvrB is released. If no lesion is found, the DNA wraps around the other UvrB subunit that will check the other stand for damage. The sequence is that of UvrABC system protein B from Mesorhizobium japonicum (strain LMG 29417 / CECT 9101 / MAFF 303099) (Mesorhizobium loti (strain MAFF 303099)).